A 409-amino-acid polypeptide reads, in one-letter code: Indian hedgehog protein (409 aa).

The N-terminal stretch at 1–23 (MQLPKVVLLLCAAALLLSGAVRG) is a signal peptide. Cys24 carries the N-palmitoyl cysteine lipid modification. Glu89, Glu90, Asp95, Thr125, Glu126, Asp129, and Asp131 together coordinate Ca(2+). Residues His140, Asp147, and His182 each contribute to the Zn(2+) site. Residue Gly197 is the site of Cholesterol glycine ester attachment.

The protein belongs to the hedgehog family. In terms of assembly, multimer. Interacts with BOC and CDON. Interacts with PTCH1. Interacts with glypican GPC3. Post-translationally, cholesterylation is required for N-product targeting to lipid rafts and multimerization. In terms of processing, the C-terminal domain displays an autoproteolysis activity and a cholesterol transferase activity. Both activities result in the cleavage of the full-length protein and covalent attachment of a cholesterol moiety to the C-terminal of the newly generated N-product. The N-product is the active species in both local and long-range signaling, whereas the C-product is degraded in the endoplasmic reticulum. N-palmitoylation by HHAT of N-product is required for indian hedgehog protein N-product multimerization and full activity. As to expression, expressed in the marginal zone at early gastrulation. At stage 14, expression begins in the neural plate with expression becoming more prominent in the anterodorsal area at neural tube closure. At this stage, also expressed diffusely in the somitic and pre-somitic mesoderm. By the early tadpole (stages 28-30), expression is widespread throughout anterior structures with highest levels in the otic vesicle, the eye, and the branchial arches.

It localises to the cell membrane. It is found in the endoplasmic reticulum membrane. The protein localises to the golgi apparatus membrane. Its subcellular location is the secreted. The catalysed reaction is glycyl-L-cysteinyl-[protein] + cholesterol + H(+) = [protein]-C-terminal glycyl cholesterol ester + N-terminal L-cysteinyl-[protein]. Signal involved in the early induction and patterning of anterodorsal ectoderm, nervous system and somites. Induces ectopic cement gland formation in embryos. It is involved in the regulation of endochondral skeleton formation, and the development of retinal pigment epithelium (RPE), photoreceptors and periocular tissues. In terms of biological role, the C-terminal part of the indian hedgehog protein precursor displays an autoproteolysis and a cholesterol transferase activity. Both activities result in the cleavage of the full-length protein into two parts followed by the covalent attachment of a cholesterol moiety to the C-terminal of the newly generated N-product. Both activities occur in the endoplasmic reticulum. Its function is as follows. The dually lipidated indian hedgehog protein N-product is a morphogen which is essential for a variety of patterning events during development. Binds to the patched (PTCH1) receptor, which functions in association with smoothened (SMO), to activate the transcription of target genes. Signal involved in the early induction and patterning of anterodorsal ectoderm, nervous system and somites. Induces ectopic cement gland formation in embryos. This Xenopus laevis (African clawed frog) protein is Indian hedgehog protein.